Reading from the N-terminus, the 316-residue chain is tRNA dimethylallyltransferase (316 aa).

An ATP-binding site is contributed by 17–24 (GPTASGKT). Substrate is bound at residue 19–24 (TASGKT). 3 interaction with substrate tRNA regions span residues 42–45 (DSAL), 166–170 (QRLSR), and 247–252 (RCVGYR).

This sequence belongs to the IPP transferase family. In terms of assembly, monomer. It depends on Mg(2+) as a cofactor.

The catalysed reaction is adenosine(37) in tRNA + dimethylallyl diphosphate = N(6)-dimethylallyladenosine(37) in tRNA + diphosphate. Functionally, catalyzes the transfer of a dimethylallyl group onto the adenine at position 37 in tRNAs that read codons beginning with uridine, leading to the formation of N6-(dimethylallyl)adenosine (i(6)A). This is tRNA dimethylallyltransferase from Citrobacter koseri (strain ATCC BAA-895 / CDC 4225-83 / SGSC4696).